The primary structure comprises 322 residues: Serine protease 38 (322 aa).

The signal sequence occupies residues 1 to 28 (MAALTSGLGVLGYLLFPLLLASPTWVTS). Positions 29 to 55 (VSRRHPKSQANSLSGDVACGQPVLQGK) are cleaved as a propeptide — activation peptide. The Peptidase S1 domain occupies 56–289 (LLGGEFARDR…FLSWIRYHLQ (234 aa)). A disulfide bond links Cys-81 and Cys-97. Active-site charge relay system residues include His-96 and Asp-146. Asn-176 is a glycosylation site (N-linked (GlcNAc...) asparagine). 3 disulfide bridges follow: Cys-179/Cys-247, Cys-210/Cys-226, and Cys-237/Cys-265. Ser-241 functions as the Charge relay system in the catalytic mechanism. N-linked (GlcNAc...) asparagine glycosylation is found at Asn-250 and Asn-276.

It belongs to the peptidase S1 family.

The protein resides in the secreted. This chain is Serine protease 38 (Prss38), found in Mus musculus (Mouse).